The sequence spans 314 residues: Ribosomal protein L11 methyltransferase (314 aa).

The S-adenosyl-L-methionine site is built by Thr163, Gly184, Asp206, and Asn248.

It belongs to the methyltransferase superfamily. PrmA family.

It localises to the cytoplasm. The enzyme catalyses L-lysyl-[protein] + 3 S-adenosyl-L-methionine = N(6),N(6),N(6)-trimethyl-L-lysyl-[protein] + 3 S-adenosyl-L-homocysteine + 3 H(+). Functionally, methylates ribosomal protein L11. The protein is Ribosomal protein L11 methyltransferase of Lactobacillus delbrueckii subsp. bulgaricus (strain ATCC BAA-365 / Lb-18).